The primary structure comprises 142 residues: Galactose-binding lectin (142 aa).

In terms of domain architecture, Galectin spans 1-141 (TYAEVESFGV…GTDIWDLLLL (141 aa)).

Homotetramer.

Its activity is regulated as follows. Cytotoxic activity against L.infantum promastigotes is completely inhibited by D-galactose. Inhibition activity against biofilm formation by S.aureus and S.epidermidis is inhibited by alpha-lactose. Hemagglutination activity is inhibited by alpha-lactose (MIC=100 mM), beta-lactose (MIC=100 mM), lactulose (MIC=100 mM), bovine submaxillary mucin (BSM) (MIC=32 ug/ml), fetuin (MIC=16 ug/ml), porcine stomach mucin (PSM) type 2 (MIC=8 ug/ml) and PSM type 3 (MIC=8 ug/ml). Functionally, galactose-binding lectin. Displays antibacterial and hemagglutinin activity. Inhibits the growth of L.infantum promastigotes by damaging their membrane integrity and inducing cell apoptosis via the production of reactive oxygen species (ROS). Inhibition of L.infantum promastigotes appears to increase with time (MIC=1.2 uM/ml after 24 hours, MIC=0.9 uM/ml after 48 hours and MIC=0.6 uM/ml after 72 hours). Agglutinates Gram-negative and Gram-positive bacteria including E.coli, S.aureus and S.epidermidis, and inhibits biofilm formation by S.aureus and S.epidermidis. Displays hemagglutination activity towards all types of human erythrocytes (O, A and B) and rabbit erythrocytes. In Chondrilla caribensis (Chicken liver sponge), this protein is Galactose-binding lectin.